The following is a 673-amino-acid chain: Armadillo repeat-containing protein 8 (673 aa).

Ala2 is modified (N-acetylalanine). ARM repeat units follow at residues 51 to 92, 95 to 134, 138 to 176, 178 to 217, 224 to 265, 269 to 309, 313 to 352, 374 to 413, 416 to 455, 458 to 497, 501 to 540, 543 to 585, 588 to 627, and 634 to 673; these read NKQK…SLAM, ENNV…TIFT, TPEE…HCCK, PDHQ…VLAF, MTLV…YMCR, IRTD…YLIE, ELQR…HDLK, DIRK…SLSR, QQLR…NLLL, SPSK…NMAF, QKIK…NLLS, PHID…NIAD, TAKD…NLIW, and QERQ…QYLA. Ser337 carries the post-translational modification Phosphoserine. Phosphoserine is present on Ser512.

Identified in the CTLH complex that contains GID4, RANBP9 and/or RANBP10, MKLN1, MAEA, RMND5A (or alternatively its paralog RMND5B), GID8, ARMC8, WDR26 and YPEL5. Within this complex, MAEA, RMND5A (or alternatively its paralog RMND5B), GID8, WDR26, and RANBP9 and/or RANBP10 form the catalytic core, while GID4, MKLN1, ARMC8 and YPEL5 have ancillary roles.

It is found in the nucleus. The protein localises to the cytoplasm. In terms of biological role, component of the CTLH E3 ubiquitin-protein ligase complex that selectively accepts ubiquitin from UBE2H and mediates ubiquitination and subsequent proteasomal degradation of the transcription factor HBP1. This Homo sapiens (Human) protein is Armadillo repeat-containing protein 8 (ARMC8).